A 727-amino-acid chain; its full sequence is NADH-ubiquinone oxidoreductase 75 kDa subunit, mitochondrial (727 aa).

A mitochondrion-targeting transit peptide spans 1–23 (MLRIPVRKALVGLSKSPKGCVRT). The 2Fe-2S ferredoxin-type domain occupies 30 to 108 (NLIEVFVDGQ…GWNILTNSEK (79 aa)). Cys-64, Cys-75, and Cys-78 together coordinate [2Fe-2S] cluster. N6-acetyllysine is present on Lys-84. Cys-92 serves as a coordination point for [2Fe-2S] cluster. The region spanning 108-147 (KSKKAREGVMELLLANHPLDCPICDQGGECDLQDQSMMFG) is the 4Fe-4S His(Cys)3-ligated-type domain. Residues His-124, Cys-128, Cys-131, Cys-137, Cys-176, Cys-179, Cys-182, and Cys-226 each coordinate [4Fe-4S] cluster. Residues 245–301 (TRKTESIDVMDAVGSNIVVSTRTGEVMRILPRMHEDINEEWISDKTRFAYDGLKRQR) form the 4Fe-4S Mo/W bis-MGD-type domain. 3 positions are modified to N6-acetyllysine: Lys-467, Lys-499, and Lys-709.

It belongs to the complex I 75 kDa subunit family. As to quaternary structure, core subunit of respiratory chain NADH dehydrogenase (Complex I) which is composed of 45 different subunits. This is the largest subunit of complex I and it is a component of the iron-sulfur (IP) fragment of the enzyme. Complex I associates with ubiquinol-cytochrome reductase complex (Complex III) to form supercomplexes. Interacts with MDM2 and AKAP1. The cofactor is [2Fe-2S] cluster. Requires [4Fe-4S] cluster as cofactor.

The protein resides in the mitochondrion inner membrane. The catalysed reaction is a ubiquinone + NADH + 5 H(+)(in) = a ubiquinol + NAD(+) + 4 H(+)(out). Core subunit of the mitochondrial membrane respiratory chain NADH dehydrogenase (Complex I) which catalyzes electron transfer from NADH through the respiratory chain, using ubiquinone as an electron acceptor. Essential for catalysing the entry and efficient transfer of electrons within complex I. Plays a key role in the assembly and stability of complex I and participates in the association of complex I with ubiquinol-cytochrome reductase complex (Complex III) to form supercomplexes. The sequence is that of NADH-ubiquinone oxidoreductase 75 kDa subunit, mitochondrial (NDUFS1) from Pongo abelii (Sumatran orangutan).